A 409-amino-acid chain; its full sequence is NADH-quinone oxidoreductase subunit D (409 aa).

It belongs to the complex I 49 kDa subunit family. In terms of assembly, NDH-1 is composed of 14 different subunits. Subunits NuoB, C, D, E, F, and G constitute the peripheral sector of the complex.

It localises to the cell inner membrane. The enzyme catalyses a quinone + NADH + 5 H(+)(in) = a quinol + NAD(+) + 4 H(+)(out). In terms of biological role, NDH-1 shuttles electrons from NADH, via FMN and iron-sulfur (Fe-S) centers, to quinones in the respiratory chain. The immediate electron acceptor for the enzyme in this species is believed to be ubiquinone. Couples the redox reaction to proton translocation (for every two electrons transferred, four hydrogen ions are translocated across the cytoplasmic membrane), and thus conserves the redox energy in a proton gradient. This is NADH-quinone oxidoreductase subunit D from Campylobacter concisus (strain 13826).